A 109-amino-acid polypeptide reads, in one-letter code: UPF0060 membrane protein YfjF (109 aa).

The next 4 membrane-spanning stretches (helical) occupy residues 6 to 26 (ILLF…VWLW), 32 to 52 (PAGY…LPTF), 61 to 81 (VYAA…WLVD), and 87 to 107 (LYDW…LFAP).

It belongs to the UPF0060 family.

It localises to the cell membrane. This is UPF0060 membrane protein YfjF (yfjF) from Bacillus subtilis (strain 168).